We begin with the raw amino-acid sequence, 241 residues long: 1-(5-phosphoribosyl)-5-[(5-phosphoribosylamino)methylideneamino] imidazole-4-carboxamide isomerase (241 aa).

D8 functions as the Proton acceptor in the catalytic mechanism. The active-site Proton donor is the D130.

This sequence belongs to the HisA/HisF family.

It is found in the cytoplasm. It catalyses the reaction 1-(5-phospho-beta-D-ribosyl)-5-[(5-phospho-beta-D-ribosylamino)methylideneamino]imidazole-4-carboxamide = 5-[(5-phospho-1-deoxy-D-ribulos-1-ylimino)methylamino]-1-(5-phospho-beta-D-ribosyl)imidazole-4-carboxamide. It functions in the pathway amino-acid biosynthesis; L-histidine biosynthesis; L-histidine from 5-phospho-alpha-D-ribose 1-diphosphate: step 4/9. The sequence is that of 1-(5-phosphoribosyl)-5-[(5-phosphoribosylamino)methylideneamino] imidazole-4-carboxamide isomerase from Francisella philomiragia subsp. philomiragia (strain ATCC 25017 / CCUG 19701 / FSC 153 / O#319-036).